The sequence spans 212 residues: B3 domain-containing protein Os04g0386900 (212 aa).

The disordered stretch occupies residues 1 to 78; sequence MRAATALPSI…PRPPEPEPEK (78 aa). Composition is skewed to low complexity over residues 8–23 and 36–46; these read PSIP…ASDP and DAGAEDPAAVD. The segment at residues 93-191 is a DNA-binding region (TF-B3); that stretch reads FTCIMCKSHV…EFRVQVLRAE (99 aa).

It localises to the nucleus. The polypeptide is B3 domain-containing protein Os04g0386900 (Oryza sativa subsp. japonica (Rice)).